The primary structure comprises 990 residues: Bifunctional glutamine synthetase adenylyltransferase/adenylyl-removing enzyme (990 aa).

Residues 1–474 (MIFSAITADL…HYAKLFEGDP (474 aa)) form an adenylyl removase region. An adenylyl transferase region spans residues 478 to 990 (AKLPPVDYGA…FNRLIGGEDA (513 aa)).

The protein belongs to the GlnE family. Mg(2+) serves as cofactor.

The catalysed reaction is [glutamine synthetase]-O(4)-(5'-adenylyl)-L-tyrosine + phosphate = [glutamine synthetase]-L-tyrosine + ADP. The enzyme catalyses [glutamine synthetase]-L-tyrosine + ATP = [glutamine synthetase]-O(4)-(5'-adenylyl)-L-tyrosine + diphosphate. Involved in the regulation of glutamine synthetase GlnA, a key enzyme in the process to assimilate ammonia. When cellular nitrogen levels are high, the C-terminal adenylyl transferase (AT) inactivates GlnA by covalent transfer of an adenylyl group from ATP to specific tyrosine residue of GlnA, thus reducing its activity. Conversely, when nitrogen levels are low, the N-terminal adenylyl removase (AR) activates GlnA by removing the adenylyl group by phosphorolysis, increasing its activity. The regulatory region of GlnE binds the signal transduction protein PII (GlnB) which indicates the nitrogen status of the cell. This is Bifunctional glutamine synthetase adenylyltransferase/adenylyl-removing enzyme from Rhodopseudomonas palustris (strain TIE-1).